The following is a 316-amino-acid chain: tRNA-cytidine(32) 2-sulfurtransferase (316 aa).

The PP-loop motif signature appears at 58-63 (SGGKDS). 3 residues coordinate [4Fe-4S] cluster: C133, C136, and C224.

Belongs to the TtcA family. As to quaternary structure, homodimer. Requires Mg(2+) as cofactor. The cofactor is [4Fe-4S] cluster.

It localises to the cytoplasm. The enzyme catalyses cytidine(32) in tRNA + S-sulfanyl-L-cysteinyl-[cysteine desulfurase] + AH2 + ATP = 2-thiocytidine(32) in tRNA + L-cysteinyl-[cysteine desulfurase] + A + AMP + diphosphate + H(+). It participates in tRNA modification. Functionally, catalyzes the ATP-dependent 2-thiolation of cytidine in position 32 of tRNA, to form 2-thiocytidine (s(2)C32). The sulfur atoms are provided by the cysteine/cysteine desulfurase (IscS) system. This Aromatoleum aromaticum (strain DSM 19018 / LMG 30748 / EbN1) (Azoarcus sp. (strain EbN1)) protein is tRNA-cytidine(32) 2-sulfurtransferase.